An 866-amino-acid chain; its full sequence is Leucine--tRNA ligase (866 aa).

The short motif at 42-52 (PYPSGKLHMGH) is the 'HIGH' region element. The short motif at 630–634 (KMSKS) is the 'KMSKS' region element. Lysine 633 contacts ATP.

Belongs to the class-I aminoacyl-tRNA synthetase family.

It is found in the cytoplasm. The enzyme catalyses tRNA(Leu) + L-leucine + ATP = L-leucyl-tRNA(Leu) + AMP + diphosphate. The chain is Leucine--tRNA ligase from Laribacter hongkongensis (strain HLHK9).